Here is a 609-residue protein sequence, read N- to C-terminus: Zinc metalloproteinase/disintegrin-like HR1a (609 aa).

The N-terminal stretch at 1 to 20 (MIQVLLVTICLAVFPYQGSS) is a signal peptide. A propeptide spanning residues 21–190 (IILGSGNVND…KKASKLVVTA (170 aa)) is cleaved from the precursor. The region spanning 200-396 (RFIELVIVAD…DEPQCILNEP (197 aa)) is the Peptidase M12B domain. The Ca(2+) site is built by E203 and D287. N298 is a glycosylation site (N-linked (GlcNAc...) asparagine). Cystine bridges form between C311–C391, C351–C375, and C353–C358. H336 is a binding site for Zn(2+). E337 is a catalytic residue. Zn(2+) is bound by residues H340 and H346. N350 is a glycosylation site (N-linked (GlcNAc...) asparagine). N374 carries an N-linked (GlcNAc...) asparagine glycan. 2 residues coordinate Ca(2+): C391 and N394. A propeptide spanning residues 397–400 (LRTD) is cleaved from the precursor. The Disintegrin domain maps to 404–490 (PPVCGNELLE…DCPTDRFHRN (87 aa)). Positions 406, 409, 411, 413, 416, and 419 each coordinate Ca(2+). Intrachain disulfides connect C407–C426, C407–C436, C418–C431, C418–C436, C420–C426, C430–C453, C444–C450, C449–C475, C462–C482, C469–C494, C469–C501, C494–C506, C501–C506, C513–C528, C513–C563, C528–C571, C541–C551, C551–C558, C558–C597, C563–C571, C591–C602, and C597–C602. The D/ECD-tripeptide signature appears at 468–470 (ECD). Ca(2+) is bound by residues D470, E473, and D485. N520 carries an N-linked (GlcNAc...) asparagine glycan.

It belongs to the venom metalloproteinase (M12B) family. P-III subfamily. P-IIIb sub-subfamily. In terms of assembly, monomer. Zn(2+) serves as cofactor. In terms of tissue distribution, expressed by the venom gland.

The protein resides in the secreted. Its function is as follows. Zinc protease that induces hemorrhage and has proteolytic activity. Has preference for Ala, His, Pro, Met, and Tyr at the P1 position, in descending order (in vitro). Predominantly prefers Val and Asp at the P3 and P2 positions, respectively. Inhibits platelet aggregation induced by ADP, thrombin, platelet-activating factor and collagen. Acts by inhibiting fibrinogen interaction with platelet receptors alpha-IIb/beta-3 (ITGA2B/ITGB3). The polypeptide is Zinc metalloproteinase/disintegrin-like HR1a (Protobothrops flavoviridis (Habu)).